Consider the following 7073-residue polypeptide: Replicase polyprotein 1ab (7073 aa).

At 1–2202 (MESLVLGVNE…NYVKSPKFSK (2202 aa)) the chain is on the cytoplasmic side. One can recognise a CoV Nsp1 globular domain in the interval 12–127 (THVQLSLPVL…YRNVLLRKNG (116 aa)). The BetaCoV Nsp1 C-terminal domain maps to 148-179 (ELGTDPIEDYEQNWNTKHGSGALRELTRELNG). Residues 183–456 (TRYVDNNFCG…NEDLLEILSR (274 aa)) form the CoV Nsp2 N-terminal domain. Zn(2+) is bound by residues cysteine 200, cysteine 231, histidine 234, histidine 236, cysteine 323, cysteine 326, cysteine 341, cysteine 344, cysteine 370, cysteine 373, histidine 382, and cysteine 416. The C2H2 stretch occupies residues 200-236 (CIKDFLARAGKSMCTLSEQLDYIESKRGVYCCRDHEH). The segment at 323-344 (CNHCDEVSWQTCDFLKATCEHC) is C4. Positions 370–416 (CPACQDPEIGPEHSVADYHNHSNIETRLRKGGRTRCFGGCVFAYVGC) are C2HC. One can recognise a CoV Nsp2 middle domain in the interval 458–688 (RVNINIVGDF…IDVVNKALEM (231 aa)). The CoV Nsp2 C-terminal domain occupies 690-818 (IDQVTIAGAK…TNNVFRLKGG (129 aa)). The Ubiquitin-like 1 domain maps to 822–930 (KGVTFGEDTV…MYCSFYPPDE (109 aa)). Disordered stretches follow at residues 972-1003 (RVEE…EEPV) and 1175-1198 (RVEA…KSVV). The segment covering 974-999 (EEEEEEDWLDDTTEQSEIEPEPEPTP) has biased composition (acidic residues). In terms of domain architecture, Macro 1 spans 1003–1169 (VNQFTGYLKL…LYEQVVMDYL (167 aa)). Macro domains follow at residues 1207–1335 (KIKA…LPSE) and 1343–1470 (ILGT…TSSS). One can recognise a DPUP domain in the interval 1472 to 1538 (TSEEHFVETV…SLDKLKSLLS (67 aa)). The 56-residue stretch at 1542 to 1597 (VKTIKVFTTVDNTNLHTQLVDMSMTYGQQFGPTYLDGADVTKIKPHVNHEGKTFFV) folds into the Ubiquitin-like 2 domain. Residues 1611–1875 (YYHTLDESFL…YTEIEPKLDG (265 aa)) enclose the Peptidase C16 domain. Cysteine 1651 serves as the catalytic For PL-PRO activity. Zn(2+) contacts are provided by cysteine 1729, cysteine 1732, cysteine 1764, and cysteine 1766. Residues 1729–1766 (CKHCGQKTTTLTGVEAVMYMGTLSYDNLKTGVSIPCVC) form a C4-type zinc finger. Active-site for PL-PRO activity residues include histidine 1812 and aspartate 1826. The 111-residue stretch at 1888-1998 (PIDLVPTQPL…CLWSTKPVDT (111 aa)) folds into the Nucleic acid-binding domain. The G2M domain occupies 2023–2132 (PTSEEVVENP…LGQAAITTSN (110 aa)). The chain crosses the membrane as a helical span at residues 2203 to 2223 (LFTIAMWLLLLSICLGSLICV). The segment at 2203–2324 (LFTIAMWLLL…FYLLGLSAIM (122 aa)) is HD1. One can recognise a 3Ecto domain in the interval 2224-2294 (TAAFGVLLSN…QVTISSYKLD (71 aa)). Residues 2224–2303 (TAAFGVLLSN…DLTILGLAAE (80 aa)) are Lumenal-facing. Intrachain disulfides connect cysteine 2240-cysteine 2268 and cysteine 2259-cysteine 2265. Residues 2304 to 2324 (WVLAYMLFTKFFYLLGLSAIM) traverse the membrane as a helical segment. Over 2325–2754 (QVFFGYFASH…TCFKLMLKAT (430 aa)) the chain is Cytoplasmic. The segment at 2372–2462 (KSYVHIMDGC…QFKRPINPTD (91 aa)) is Y1. One can recognise a CoV Nsp3 Y domain in the interval 2372–2740 (KSYVHIMDGC…ITTKISLKGG (369 aa)). Zn(2+) contacts are provided by histidine 2376, cysteine 2381, cysteine 2386, cysteine 2389, cysteine 2422, histidine 2425, cysteine 2429, and cysteine 2432. A ZF1 region spans residues 2376–2389 (HIMDGCTSSTCMMC). Positions 2422 to 2432 (CKTHNWNCLNC) are ZF2. The Y2 stretch occupies residues 2463–2557 (QSSYIVDSVA…LLDQALVSDV (95 aa)). The segment at 2463–2740 (QSSYIVDSVA…ITTKISLKGG (278 aa)) is coV-Y. Residues 2558-2639 (GDSTEVSVKM…ECLKLSHHSD (82 aa)) form a Y3 region. The Y4 stretch occupies residues 2640 to 2740 (LEVTGDSCNN…ITTKISLKGG (101 aa)). The chain crosses the membrane as a helical span at residues 2755 to 2775 (LLCVLAALVCYIVMPVHTLSI). Residues 2755-3125 (LLCVLAALVC…WITAIYVFCI (371 aa)) form an HD2 region. The Lumenal segment spans residues 2776–3021 (HDGYTNEIIG…VQPVGALDVS (246 aa)). Residues 3022–3042 (ASVVAGGIIAILVTCAAYYFM) form a helical membrane-spanning segment. At 3043 to 3076 (KFRRVFGEYNHVVAANALLFLMSFTILCLVPAYS) the chain is on the cytoplasmic side. The helical transmembrane segment at 3077–3097 (FLPGVYSVFYLYLTFYFTNDV) threads the bilayer. At 3098 to 3104 (SFLAHLQ) the chain is on the lumenal side. A helical transmembrane segment spans residues 3105–3125 (WFAMFSPIVPFWITAIYVFCI). At 3126–3563 (SLKHCHWFFN…KGTHHWMLLT (438 aa)) the chain is on the cytoplasmic side. The Nsp4C domain maps to 3142 to 3240 (VMFNGVTFST…QTSITSAVLQ (99 aa)). A Peptidase C30 domain is found at 3241–3546 (SGFRKMAFPS…VRQCSGVTFQ (306 aa)). Active-site for 3CL-PRO activity residues include histidine 3281 and cysteine 3385. A helical membrane pass occupies residues 3564–3584 (FLTSLLILVQSTQWSLFFFVY). The tract at residues 3564–3776 (FLTSLLILVQ…CCCYFGLFCL (213 aa)) is HD3. Glutamate 3585 is a topological domain (lumenal). A helical transmembrane segment spans residues 3586 to 3606 (NAFLPFTLGIMAIAACAMLLV). Residues 3607 to 3611 (KHKHA) are Cytoplasmic-facing. A helical transmembrane segment spans residues 3612–3632 (FLCLFLLPSLATVAYFNMVYM). Over 3633 to 3657 (PASWVMRIMTWLELADTSLSGYRLK) the chain is Lumenal. The chain crosses the membrane as a helical span at residues 3658–3678 (DCVMYASALVLLILMTARTVY). Topologically, residues 3679-3727 (DDAARRVWTLMNVITLVYKVYYGNALDQAISMWALVISVTSNYSGVVTT) are cytoplasmic. Residues 3728-3748 (IMFLARAIVFVCVEYYPLLFI) traverse the membrane as a helical segment. Over 3749-3755 (TGNTLQC) the chain is Lumenal. Residues 3756–3776 (IMLVYCFLGYCCCCYFGLFCL) form a helical membrane-spanning segment. The Cytoplasmic segment spans residues 3777–7073 (LNRYFRLTLG…VVSSDILVNN (3297 aa)). The region spanning 3837–3919 (SKMSDVKCTS…EMLDNRATLQ (83 aa)) is the RdRp Nsp7 cofactor domain. A RdRp Nsp8 cofactor domain is found at 3920 to 4117 (AIASEFSSLP…LRANSAVKLQ (198 aa)). The Nsp9 ssRNA-binding domain occupies 4118-4230 (NNELSPVALR…GSLAATVRLQ (113 aa)). The 139-residue stretch at 4231-4369 (AGNATEVPAN…CDQLREPLMQ (139 aa)) folds into the ExoN/MTase coactivator domain. Zn(2+)-binding residues include cysteine 4304, cysteine 4307, histidine 4313, cysteine 4320, cysteine 4347, cysteine 4350, cysteine 4358, and cysteine 4360. 2 zinc fingers span residues 4304–4320 (CLYC…KGFC) and 4347–4360 (CTVC…GCSC). The NiRAN domain maps to 4376-4630 (FLNRVCGVSA…AAESHMDADL (255 aa)). Residues asparagine 4578 and aspartate 4587 each contribute to the Mn(2+) site. The Nsp12 Interface domain occupies 4635-4733 (IKWDLLKYDF…HNQDVNLHSS (99 aa)). Zn(2+) is bound by residues histidine 4664, cysteine 4670, cysteine 4675, cysteine 4679, and cysteine 4856. One can recognise a Nsp12 RNA-dependent RNA polymerase domain in the interval 4734–5301 (RLSFKELLVY…AMYTPHTVLQ (568 aa)). The interval 4736-4950 (SFKELLVYAA…HQKLLKSIAA (215 aa)) is rdRp Fingers N-ter. The interval 4951-4989 (TRGATVVIGTSKFYGGWHNMLKTVYSDVETPHLMGWDYP) is rdRp Palm N-ter. Residues 4981 to 5143 (PHLMGWDYPK…CYNSNYAAQG (163 aa)) enclose the RdRp catalytic domain. The segment at 4990 to 5048 (KCDRAMPNMLRIMASLVLARKHNTCCNLSHRFYRLANECAQVLSEMVMCGGSLYVKPGG) is rdRp Fingers C-ter. Zn(2+) is bound by residues histidine 5011, cysteine 5014, and cysteine 5015. The interval 5049–5184 (TSSGDATTAY…TKGPHEFCSQ (136 aa)) is rdRp Palm C-ter. Residues serine 5128, aspartate 5129, and aspartate 5130 contribute to the active site. Positions 5185–5301 (HTMLVKQGDD…AMYTPHTVLQ (117 aa)) are rdRp Thumb. The 113-residue stretch at 5302 to 5414 (AVGACVLCNS…TDFNAIATCD (113 aa)) folds into the CV ZBD domain. Zn(2+)-binding residues include cysteine 5306, cysteine 5309, cysteine 5317, cysteine 5320, cysteine 5327, cysteine 5330, histidine 5334, histidine 5340, cysteine 5351, cysteine 5356, cysteine 5373, and histidine 5376. In terms of domain architecture, (+)RNA virus helicase ATP-binding spans 5558–5739 (NISDEFSSNV…MKTIGPDMFL (182 aa)). 5583–5590 (GPPGTGKS) provides a ligand contact to ATP. A (+)RNA virus helicase C-terminal domain is found at 5740-5909 (GTCRRCPAEI…TLQAENVTGL (170 aa)). The ExoN domain occupies 5974–6189 (MFITREEAIR…RCLAVHECFV (216 aa)). Catalysis depends on residues aspartate 5992, glutamate 5994, and glutamate 6093. 2 residues coordinate Mg(2+): glutamate 5994 and glutamate 6093. Residues cysteine 6109, cysteine 6112, cysteine 6128, histidine 6131, histidine 6159, cysteine 6163, and histidine 6166 each contribute to the Zn(2+) site. Catalysis depends on residues histidine 6170 and aspartate 6175. Residues histidine 6170 and aspartate 6175 each coordinate Mg(2+). Residue cysteine 6181 participates in Zn(2+) binding. An N7-MTase domain is found at 6198–6429 (YPIIGDELRV…NLWNTFTRLQ (232 aa)). 6233–6239 (DIGNPKA) serves as a coordination point for S-adenosyl-L-methionine. The segment at 6316-6330 (CDGGSLYVNKHAFHT) is gpppA-binding. 4 residues coordinate Zn(2+): cysteine 6354, cysteine 6375, cysteine 6386, and histidine 6389. Positions 6430–6490 (SLENVAYNVV…NVAFELWAKR (61 aa)) constitute a Nsp15 N-terminal oligomerization domain. Residues 6491–6616 (NIKPVPEIKI…YFKKVDGIIQ (126 aa)) enclose the AV-Nsp11N/CoV-Nsp15M domain. In terms of domain architecture, NendoU spans 6633 to 6772 (KPRSQMETDF…KDGHVETFYP (140 aa)). Active-site residues include histidine 6663, histidine 6678, lysine 6718, lysine 6821, aspartate 6905, lysine 6945, and glutamate 6978. A Nidovirus-type SAM-dependent 2'-O-MTase domain is found at 6777 to 7071 (SQAWQPGVAM…RVVVSSDILV (295 aa)).

The protein belongs to the coronaviruses polyprotein 1ab family. As to quaternary structure, interacts with host PHB and PHB2. In terms of assembly, interacts with papain-like protease nsp3 and non-structural protein 6. Monomer. Homodimer. Only the homodimer shows catalytic activity. As to quaternary structure, interacts with nsp8 and nsp12 to form the replication-transcription complex (RTC): nsp12, nsp7, two subunits of nsp8, and up to two subunits of nsp13. Eight copies of nsp7 and eight copies of nsp8 assemble to form a heterohexadecamer dsRNA-encircling ring structure. In terms of assembly, interacts with nsp7, nsp13 and nsp12 to form the replication-transcription complex (RTC): nsp12, nsp7, two subunits of nsp8, and up to two subunits of nsp13. Eight copies of nsp7 and eight copies of nsp8 assemble to form a heterohexadecamer dsRNA-encircling ring structure. Interacts with ORF6 protein. Homodimer. Interacts with nsp12. As to quaternary structure, homododecamer. Interacts with proofreading exoribonuclease nsp14 and 2'-O-methyltransferase nsp16; these interactions enhance nsp14 and nsp16 enzymatic activities. In terms of assembly, interacts with nsp7 and nsp8 to form the replication-transcription complex (RTC): nsp12, nsp7, two subunits of nsp8, and up to two subunits of nsp13. Interacts with nsp9. Interacts with nsp8 to form the replication-transcription complex (RTC): nsp12, nsp7, two subunits of nsp8, and up to two subunits of nsp13. As to quaternary structure, interacts (via N-terminus) with host DDX1. Interacts with non-structural protein 10. In terms of assembly, homohexamer. Interacts with nsp10. The cofactor is Zn(2+). Mn(2+) serves as cofactor. Mg(2+) is required as a cofactor. Post-translationally, specific enzymatic cleavages in vivo by its own proteases yield mature proteins. 3C-like proteinase nsp5 liberates nsps 6-16 from the polyprotein. Papain-like and 3C-like proteinases are autocatalytically processed.

The protein localises to the host cytoplasm. It localises to the host endosome. Its subcellular location is the host membrane. It is found in the host Golgi apparatus. The protein resides in the host perinuclear region. The protein localises to the host endoplasmic reticulum. It localises to the host endoplasmic reticulum-Golgi intermediate compartment. The catalysed reaction is RNA(n) + a ribonucleoside 5'-triphosphate = RNA(n+1) + diphosphate. It carries out the reaction ATP + H2O = ADP + phosphate + H(+). The enzyme catalyses TSAVLQ-|-SGFRK-NH2 and SGVTFQ-|-GKFKK the two peptides corresponding to the two self-cleavage sites of the SARS 3C-like proteinase are the two most reactive peptide substrates. The enzyme exhibits a strong preference for substrates containing Gln at P1 position and Leu at P2 position.. It catalyses the reaction Thiol-dependent hydrolysis of ester, thioester, amide, peptide and isopeptide bonds formed by the C-terminal Gly of ubiquitin (a 76-residue protein attached to proteins as an intracellular targeting signal).. The catalysed reaction is a 5'-end (N(7)-methyl 5'-triphosphoguanosine)-ribonucleoside in mRNA + S-adenosyl-L-methionine = a 5'-end (N(7)-methyl 5'-triphosphoguanosine)-(2'-O-methyl-ribonucleoside) in mRNA + S-adenosyl-L-homocysteine + H(+). It carries out the reaction uridylyl-uridylyl-ribonucleotide-RNA = a 3'-end uridylyl-2',3'-cyclophospho-uridine-RNA + a 5'-end dephospho-ribonucleoside-RNA. The enzyme catalyses a 5'-end (5'-triphosphoguanosine)-ribonucleoside in mRNA + S-adenosyl-L-methionine = a 5'-end (N(7)-methyl 5'-triphosphoguanosine)-ribonucleoside in mRNA + S-adenosyl-L-homocysteine. It catalyses the reaction a 5'-end diphospho-ribonucleoside in mRNA + GTP + H(+) = a 5'-end (5'-triphosphoguanosine)-ribonucleoside in mRNA + diphosphate. With respect to regulation, inhibited by Remdesivir (GS-5734). Multifunctional protein involved in the transcription and replication of viral RNAs. Contains the proteinases responsible for the cleavages of the polyprotein. Its function is as follows. Inhibits host translation by interacting with the 40S ribosomal subunit. The nsp1-40S ribosome complex further induces an endonucleolytic cleavage near the 5'UTR of host mRNAs, targeting them for degradation. Viral mRNAs are not susceptible to nsp1-mediated endonucleolytic RNA cleavage thanks to the presence of a 5'-end leader sequence and are therefore protected from degradation. By suppressing host gene expression, nsp1 facilitates efficient viral gene expression in infected cells and evasion from host immune response. May disrupt nuclear pore function by binding and displacing host NUP93. In terms of biological role, may play a role in the modulation of host cell survival signaling pathway by interacting with host PHB and PHB2. Indeed, these two proteins play a role in maintaining the functional integrity of the mitochondria and protecting cells from various stresses. Functionally, responsible for the cleavages located at the N-terminus of the replicase polyprotein. In addition, PL-PRO possesses a deubiquitinating/deISGylating activity and processes both 'Lys-48'- and 'Lys-63'-linked polyubiquitin chains from cellular substrates. Plays a role in host membrane rearrangement that leads to creation of cytoplasmic double-membrane vesicles (DMV) necessary for viral replication. Nsp3, nsp4 and nsp6 together are sufficient to form DMV. Antagonizes innate immune induction of type I interferon by blocking the phosphorylation, dimerization and subsequent nuclear translocation of host IRF3. Also prevents host NF-kappa-B signaling. Plays a role in host membrane rearrangement that leads to creation of cytoplasmic double-membrane vesicles (DMV) necessary for viral replication. Alone appears incapable to induce membrane curvature, but together with nsp3 is able to induce paired membranes. Nsp3, nsp4 and nsp6 together are sufficient to form DMV. Its function is as follows. Cleaves the C-terminus of replicase polyprotein at 11 sites. Recognizes substrates containing the core sequence [ILMVF]-Q-|-[SGACN]. May cleave human NLRP1 in lung epithelial cells, thereby activating the NLRP1 inflammasome pathway. Also able to bind an ADP-ribose-1''-phosphate (ADRP). May cleave host ATP6V1G1 thereby modifying host vacuoles intracellular pH. In terms of biological role, plays a role in host membrane rearrangement that leads to creation of cytoplasmic double-membrane vesicles (DMV) necessary for viral replication. Nsp3, nsp4 and nsp6 together are sufficient to form DMV. Plays a role in the initial induction of autophagosomes from host endoplasmic reticulum. Later, limits the expansion of these phagosomes that are no longer able to deliver viral components to lysosomes. Functionally, forms a hexadecamer with nsp8 (8 subunits of each) that may participate in viral replication by acting as a primase. Alternatively, may synthesize substantially longer products than oligonucleotide primers. Forms a hexadecamer with nsp7 (8 subunits of each) that may participate in viral replication by acting as a primase. Alternatively, may synthesize substantially longer products than oligonucleotide primers. Its function is as follows. Forms a primer, NSP9-pU, which is utilized by the polymerase for the initiation of RNA chains. Interacts with ribosome signal recognition particle RNA (SRP). Together with NSP8, suppress protein integration into the cell membrane, thereby disrupting host immune defenses. In terms of biological role, plays a pivotal role in viral transcription by stimulating both nsp14 3'-5' exoribonuclease and nsp16 2'-O-methyltransferase activities. Therefore plays an essential role in viral mRNAs cap methylation. Functionally, RNA-directed RNA polymerase that catalyzes the transcription of viral genomic and subgenomic RNAs. Acts in complex with nsp7 and nsp8 to transcribe both the minus and positive strands of genomic RNA. The kinase-like NiRAN domain of NSP12 attaches one or more nucleotides to the amino terminus of NSP9, forming a covalent RNA-protein intermediate that serves as transcription/replication primer. Subgenomic RNAs (sgRNAs) are formed by discontinuous transcription: The polymerase has the ability to pause at transcription-regulating sequences (TRS) and jump to the leader TRS, resulting in a major deletion. This creates a series of subgenomic RNAs that are replicated, transcribed and translated. In addition, Nsp12 is a subunit of the viral RNA capping enzyme that catalyzes the RNA guanylyltransferase reaction for genomic and sub-genomic RNAs. Subsequently, the NiRAN domain transfers RNA to GDP, and forms the core cap structure GpppA-RNA. Multi-functional protein with a zinc-binding domain in N-terminus displaying RNA and DNA duplex-unwinding activities with 5' to 3' polarity. Activity of helicase is dependent on magnesium. Its function is as follows. Plays a role in viral RNA synthesis through two distinct activities. The N7-guanine methyltransferase activity plays a role in the formation of the cap structure GpppA-RNA. The proofreading exoribonuclease reduces the sensitivity of the virus to RNA mutagens during replication. This activity acts on both ssRNA and dsRNA in a 3'-5' direction. In terms of biological role, plays a role in viral transcription/replication and prevents the simultaneous activation of host cell dsRNA sensors, such as MDA5/IFIH1, OAS, and PKR. Acts by degrading the 5'-polyuridines generated during replication of the poly(A) region of viral genomic and subgenomic RNAs. Catalyzes a two-step reaction in which a 2'3'-cyclic phosphate (2'3'-cP) is first generated by 2'-O transesterification, which is then hydrolyzed to a 3'-phosphate (3'-P). If not degraded, poly(U) RNA would hybridize with poly(A) RNA tails and activate host dsRNA sensors. Functionally, methyltransferase that mediates mRNA cap 2'-O-ribose methylation to the 5'-cap structure of viral mRNAs. N7-methyl guanosine cap is a prerequisite for binding of nsp16. Therefore plays an essential role in viral mRNAs cap methylation which is essential to evade immune system. In Severe acute respiratory syndrome coronavirus (SARS-CoV), this protein is Replicase polyprotein 1ab (rep).